The following is a 216-amino-acid chain: MERGETPEEERQSGCVLPTSPESDSLKTSNWGFLITGVIGGALVTVYAVTTPFIAPALRKVCLPFVPATSRQVENVVKMLQHRRGPLVDIGSGDGRIVIAAAKAGFPAVGYELNPWLVWYSRYRAWREGVHGSAKFYISDLWKVTFAQYSNVVIFGVPQMMPQLEKKLEFELEDGARVIACRFPFPHWTPDHTTGEGIDTVWAYDMSACRTQGKRA.

The residue at position 1 (M1) is an N-acetylmethionine. Residues 1–12 are compositionally biased toward basic and acidic residues; the sequence is MERGETPEEERQ. The tract at residues 1–25 is disordered; the sequence is MERGETPEEERQSGCVLPTSPESDS. A helical transmembrane segment spans residues 31-50; the sequence is WGFLITGVIGGALVTVYAVT. The tract at residues 51 to 85 is required for mitochondrial location; the sequence is TPFIAPALRKVCLPFVPATSRQVENVVKMLQHRRG.

Belongs to the ANT/ATPSC lysine N-methyltransferase family.

Its subcellular location is the mitochondrion membrane. It catalyses the reaction L-lysyl-[protein] + 3 S-adenosyl-L-methionine = N(6),N(6),N(6)-trimethyl-L-lysyl-[protein] + 3 S-adenosyl-L-homocysteine + 3 H(+). Mitochondrial protein-lysine N-methyltransferase that trimethylates ATP synthase subunit C, ATP5MC1 and ATP5MC2. Trimethylation is required for proper incorporation of the C subunit into the ATP synthase complex and mitochondrial respiration. Promotes chronic pain. Involved in persistent inflammatory and neuropathic pain: methyltransferase activity in the mitochondria of sensory neurons promotes chronic pain via a pathway that depends on the production of reactive oxygen species (ROS) and on the engagement of spinal cord microglia. The polypeptide is ATP synthase subunit C lysine N-methyltransferase (Atpsckmt) (Rattus norvegicus (Rat)).